Reading from the N-terminus, the 407-residue chain is NAD(P)H-quinone oxidoreductase subunit 1 (407 aa).

The next 9 helical transmembrane spans lie at 28-48, 96-116, 127-147, 175-195, 203-223, 267-287, 309-329, 347-367, and 374-394; these read WLPL…IAAV, WLFT…YLVI, ITIG…GALM, LALS…VDIV, LFSF…IFLI, LILA…FIVP, ALVG…LAIL, WKFL…LVLL, and TLPL…AMSL.

Belongs to the complex I subunit 1 family. As to quaternary structure, NDH-1 is composed of at least 11 different subunits.

It is found in the cell inner membrane. The enzyme catalyses a plastoquinone + NADH + (n+1) H(+)(in) = a plastoquinol + NAD(+) + n H(+)(out). It catalyses the reaction a plastoquinone + NADPH + (n+1) H(+)(in) = a plastoquinol + NADP(+) + n H(+)(out). Its function is as follows. NDH-1 shuttles electrons from an unknown electron donor, via FMN and iron-sulfur (Fe-S) centers, to quinones in the respiratory and/or the photosynthetic chain. The immediate electron acceptor for the enzyme in this species is believed to be plastoquinone. Couples the redox reaction to proton translocation, and thus conserves the redox energy in a proton gradient. This Gloeobacter violaceus (strain ATCC 29082 / PCC 7421) protein is NAD(P)H-quinone oxidoreductase subunit 1.